Reading from the N-terminus, the 120-residue chain is Spermidine export protein MdtJ (120 aa).

The next 4 membrane-spanning stretches (helical) occupy residues 1–21, 31–51, 54–74, and 81–101; these read MFYWILLALAIATEITGTLSM, AGFILMLVMITLSYIFLSFAV, IALGVAYALWEGIGILFITIF, and EALSTMKIAGLLTLVAGIVLI.

Belongs to the drug/metabolite transporter (DMT) superfamily. Small multidrug resistance (SMR) (TC 2.A.7.1) family. MdtJ subfamily. In terms of assembly, forms a complex with MdtI.

The protein localises to the cell inner membrane. Its function is as follows. Catalyzes the excretion of spermidine. This chain is Spermidine export protein MdtJ, found in Salmonella choleraesuis (strain SC-B67).